The chain runs to 488 residues: GTPase Der (488 aa).

EngA-type G domains lie at 3–166 and 201–374; these read PVVA…VSDG and IKLA…QCAT. Residues 9–16, 56–60, 118–121, 207–214, 254–258, and 319–322 each bind GTP; these read GRPNVGKS, DTGGI, NKTD, DTAGV, and NKWD. One can recognise a KH-like domain in the interval 375 to 459; it reads KRVSTALLTR…PIRIQFNEGA (85 aa).

It belongs to the TRAFAC class TrmE-Era-EngA-EngB-Septin-like GTPase superfamily. EngA (Der) GTPase family. As to quaternary structure, associates with the 50S ribosomal subunit.

In terms of biological role, GTPase that plays an essential role in the late steps of ribosome biogenesis. The polypeptide is GTPase Der (Sodalis glossinidius (strain morsitans)).